Reading from the N-terminus, the 222-residue chain is Transmembrane reductase CYB561D2 (222 aa).

Residues 2–17 (ALSVETESHIYRALRT) are Cytoplasmic-facing. A Cytochrome b561 domain is found at 14–217 (ALRTASGAAA…NQVSNAYLYR (204 aa)). The helical transmembrane segment at 18 to 38 (ASGAAAHLVALGFTIFVAVLA) threads the bilayer. The Lumenal portion of the chain corresponds to 39–46 (RPGSSLFS). Residues 47–67 (WHPVLMSLAFSFLMTEALLMF) traverse the membrane as a helical segment. Residue His48 participates in heme b binding. Topologically, residues 68–85 (SPESSLLRSLSRKVRARC) are cytoplasmic. Heme b contacts are provided by His86 and His120. A helical transmembrane segment spans residues 86 to 106 (HWVLQLLALLCALLGLGLVIL). Over 107–122 (HKEQLGKAHLTTRHGQ) the chain is Lumenal. Residues 123-143 (AGLLAVLWAGLQCSGGMGLLY) traverse the membrane as a helical segment. Residues 144 to 162 (PKLLPRWPLAKLKLYHATS) are Cytoplasmic-facing. Residue His159 participates in heme b binding. The chain crosses the membrane as a helical span at residues 163 to 183 (GLVGYLLGSASLLLGMFSLWF). Over 184 to 186 (TAT) the chain is Lumenal. A helical membrane pass occupies residues 187–207 (VTGGAWYLAVLCPILTSLVIM). Topologically, residues 208 to 222 (NQVSNAYLYRKRIQP) are cytoplasmic.

Requires heme b as cofactor. In terms of tissue distribution, highly expressed in the brain, lung, liver, and kidney. Moderately expressed in the heart, placenta, skeletal muscle, and pancreas.

The protein localises to the endoplasmic reticulum membrane. Its subcellular location is the cytoplasmic vesicle membrane. It catalyses the reaction monodehydro-L-ascorbate radical(out) + L-ascorbate(in) = monodehydro-L-ascorbate radical(in) + L-ascorbate(out). The catalysed reaction is Fe(3+)(out) + L-ascorbate(in) = monodehydro-L-ascorbate radical(in) + Fe(2+)(out) + H(+). Its function is as follows. Transmembrane reductase that may use ascorbate as an electron donor in the cytoplasm and transfer electrons across endoplasmic reticulum membranes to reduce monodehydro-L-ascorbate radical and iron cations Fe(3+) in the lumen of that compartment. This Mus musculus (Mouse) protein is Transmembrane reductase CYB561D2.